A 136-amino-acid polypeptide reads, in one-letter code: Keratin-associated protein 9-3 (136 aa).

11 tandem repeats follow at residues 3 to 7, 21 to 25, 31 to 35, 36 to 40, 41 to 45, 46 to 50, 87 to 91, 97 to 101, 107 to 111, 117 to 121, and 126 to 130. An 11 X 5 AA repeats of C-C-[AEQVR]-[ALPTV]-[AGHST] region spans residues 21-130; sequence CCQPTCTQSS…ACCCYCCQPS (110 aa).

This sequence belongs to the KRTAP type 9 family. In terms of assembly, interacts with hair keratins.

In terms of biological role, in the hair cortex, hair keratin intermediate filaments are embedded in an interfilamentous matrix, consisting of hair keratin-associated proteins (KRTAP), which are essential for the formation of a rigid and resistant hair shaft through their extensive disulfide bond cross-linking with abundant cysteine residues of hair keratins. The matrix proteins include the high-sulfur and high-glycine-tyrosine keratins. In Mus musculus (Mouse), this protein is Keratin-associated protein 9-3.